Consider the following 240-residue polypeptide: Small ribosomal subunit protein uS3 (240 aa).

A KH type-2 domain is found at 39–109 (IRQYIEKTLN…QIRVNVIEVP (71 aa)). Residues 219–240 (APPSQPRRKSRRQQFDDRSQDG) are disordered. The segment covering 231 to 240 (QQFDDRSQDG) has biased composition (basic and acidic residues).

The protein belongs to the universal ribosomal protein uS3 family. In terms of assembly, part of the 30S ribosomal subunit. Forms a tight complex with proteins S10 and S14.

In terms of biological role, binds the lower part of the 30S subunit head. Binds mRNA in the 70S ribosome, positioning it for translation. This chain is Small ribosomal subunit protein uS3, found in Synechocystis sp. (strain ATCC 27184 / PCC 6803 / Kazusa).